A 336-amino-acid polypeptide reads, in one-letter code: Protein DIA1 (336 aa).

Its subcellular location is the cytoplasm. Functionally, involved in regulation of invasive growth. The polypeptide is Protein DIA1 (DIA1) (Saccharomyces cerevisiae (strain ATCC 204508 / S288c) (Baker's yeast)).